Here is a 664-residue protein sequence, read N- to C-terminus: MPLRDKYCQTDHHHHGCCEPVYILEPGDPPLLQQPLQTSKSGIQQIIECFRSGTKQLKHILLKDVDTIFECKLCRSLFRGLPNLITHKKFYCPPSLQMDDNLPDVNDKQSQAINDLLEAIYPSVDKREYIIKLEPIETNQNAVFQYISRTDNPIEVTESSSTPEQTEVQIQETSTEQSKTVPVTDTEVETVEPPPVEIVTDEVAPTSDEQPQESQADLETSDNSDFGHQLICCLCRKEFNSRRGVRRHIRKVHKKKMEELKKYIETRKNPNQSSKGRSKNVLVPLSRSCPVCCKSFATKANVRRHFDEVHRGLRRDSITPDIATKPGQPLFLDSISPKKSFKTRKQKSSSKAEYNLTACKCLLCKRKYSSQIMLKRHMQIVHKITLSGTNSKREKGPNNTANSSEIKVKVEPADSVESSPPSITHSPQNELKGTNHSNEKKNTPAAQKNKVKQDSESPKSTSPSAAGGQQKTRKPKLSAGFDFKQLYCKLCKRQFTSKQNLTKHIELHTDGNNIYVKFYKCPLCTYETRRKRDVIRHITVVHKKSSRYLGKITASLEIRAIKKPIDFVLNKVAKRGPSRDEAKHSDSKHDGTSNSPSKKYEVADVGIEVKVTKNFSLHRCNKCGKAFAKKTYLEHHKKTHKANASNSPEGNKTKGRSTRSKALV.

The segment at 69–91 adopts a C2H2-type 1; degenerate zinc-finger fold; that stretch reads FECKLCRSLFRGLPNLITHKKFY. K132 is covalently cross-linked (Glycyl lysine isopeptide (Lys-Gly) (interchain with G-Cter in SUMO2)). Polar residues-rich tracts occupy residues 154–179 and 207–224; these read IEVT…EQSK and SDEQ…SDNS. Residues 154 to 224 are disordered; sequence IEVTESSSTP…QADLETSDNS (71 aa). The C2H2-type 2 zinc-finger motif lies at 230–253; the sequence is LICCLCRKEFNSRRGVRRHIRKVH. K279 is covalently cross-linked (Glycyl lysine isopeptide (Lys-Gly) (interchain with G-Cter in SUMO2)). The C2H2-type 3 zinc-finger motif lies at 287–310; sequence RSCPVCCKSFATKANVRRHFDEVH. S317 carries the post-translational modification Phosphoserine. Position 319 is a phosphothreonine (T319). Residues 328–349 are disordered; the sequence is QPLFLDSISPKKSFKTRKQKSS. S336 carries the post-translational modification Phosphoserine. Residues 339–348 show a composition bias toward basic residues; the sequence is KSFKTRKQKS. A C2H2-type 4 zinc finger spans residues 357-382; it reads TACKCLLCKRKYSSQIMLKRHMQIVH. The segment at 388-476 is disordered; sequence GTNSKREKGP…GGQQKTRKPK (89 aa). A Glycyl lysine isopeptide (Lys-Gly) (interchain with G-Cter in SUMO2) cross-link involves residue K392. A Glycyl lysine isopeptide (Lys-Gly) (interchain with G-Cter in SUMO1); alternate cross-link involves residue K409. Residue K409 forms a Glycyl lysine isopeptide (Lys-Gly) (interchain with G-Cter in SUMO2); alternate linkage. Residues 416-436 are compositionally biased toward polar residues; sequence VESSPPSITHSPQNELKGTNH. Phosphoserine is present on residues S422, S426, S455, S457, S460, and S462. Over residues 458–470 the composition is skewed to polar residues; that stretch reads PKSTSPSAAGGQQ. Residue K476 forms a Glycyl lysine isopeptide (Lys-Gly) (interchain with G-Cter in SUMO2) linkage. 2 consecutive C2H2-type zinc fingers follow at residues 486–508 and 519–542; these read LYCK…IELH and YKCP…TVVH. Disordered regions lie at residues 574–599 and 635–664; these read KRGP…PSKK and HHKK…KALV. Residues 577 to 591 are compositionally biased toward basic and acidic residues; the sequence is PSRDEAKHSDSKHDG. K599 participates in a covalent cross-link: Glycyl lysine isopeptide (Lys-Gly) (interchain with G-Cter in SUMO2). Residues 618 to 640 form a C2H2-type 7 zinc finger; it reads HRCNKCGKAFAKKTYLEHHKKTH. The span at 653 to 664 shows a compositional bias: basic residues; sequence TKGRSTRSKALV.

Belongs to the krueppel C2H2-type zinc-finger protein family.

The protein resides in the nucleus. Its function is as follows. May be involved in transcriptional regulation. In Homo sapiens (Human), this protein is Zinc finger protein 800 (ZNF800).